Here is a 266-residue protein sequence, read N- to C-terminus: MLRFLVFATLVLYGHSTQDFPETNARVVGGTEAGRNSWPSQISLQYLSGGSWYHTCGGTLIRQNWVMTAAHCVDSPKTFRVVVGDHNLSQNDGTEQYVSVQKIVVHPYWNSNNVAAGYDIALLRLAQSVTLNSYVQLGVLPQEGAILANDSPCYITGWGRTKTNGQLAQTLQQAYLPSVDYAICSSSSYWGSTVKNTMVCAGGDGVHSGCQGDSGGPLHCLVNGKYSVHGVTSFVSKQGCNVSRKPTVFTRVSAYISWINKTIASN.

The first 16 residues, 1–16 (MLRFLVFATLVLYGHS), serve as a signal peptide directing secretion. A propeptide spans 17–26 (TQDFPETNAR) (activation peptide). The 238-residue stretch at 27–264 (VVGGTEAGRN…YISWINKTIA (238 aa)) folds into the Peptidase S1 domain. C56 and C72 form a disulfide bridge. The Charge relay system role is filled by H71. Ca(2+) contacts are provided by D85, N87, Q90, and E95. N-linked (GlcNAc...) asparagine glycosylation occurs at N87. The active-site Charge relay system is the D119. Intrachain disulfides connect C153–C220, C184–C200, and C210–C240. S214 (charge relay system) is an active-site residue. N-linked (GlcNAc...) asparagine glycans are attached at residues N241 and N260.

Belongs to the peptidase S1 family. Elastase subfamily. Requires Ca(2+) as cofactor.

The protein resides in the secreted. The enzyme catalyses Hydrolysis of proteins, including elastin. Preferential cleavage: Ala-|-Xaa.. Serine proteases that hydrolyze many proteins in addition to elastin. This is Chymotrypsin-like elastase family member 1 (CELA1) from Macaca fascicularis (Crab-eating macaque).